Reading from the N-terminus, the 223-residue chain is Small ribosomal subunit protein uS3 (223 aa).

Residues 39–107 (IRQFLRKKPS…EVWLEIAEIK (69 aa)) enclose the KH type-2 domain.

This sequence belongs to the universal ribosomal protein uS3 family. As to quaternary structure, part of the 30S ribosomal subunit. Forms a tight complex with proteins S10 and S14.

In terms of biological role, binds the lower part of the 30S subunit head. Binds mRNA in the 70S ribosome, positioning it for translation. The chain is Small ribosomal subunit protein uS3 from Chlamydia pneumoniae (Chlamydophila pneumoniae).